An 85-amino-acid polypeptide reads, in one-letter code: MFVSLKLPTKAALSKLFLQCKALRGFFLKEANYNFQHSWLYFIFVLNQLAYMRGNFSVIALRELKWEVKRAFDRYRYFFKKHVYT.

It is found in the mitochondrion. This is an uncharacterized protein from Paramecium tetraurelia.